Consider the following 262-residue polypeptide: uncharacterized protein (262 aa).

Belongs to the BtpA family.

This is an uncharacterized protein from Pyrococcus furiosus (strain ATCC 43587 / DSM 3638 / JCM 8422 / Vc1).